Reading from the N-terminus, the 406-residue chain is ATPase ASNA1 homolog (406 aa).

21–28 (KGGVGKTT) provides a ligand contact to ATP. Residue aspartate 62 is part of the active site. ATP is bound by residues glutamate 300 and asparagine 327. The Zn(2+) site is built by cysteine 339 and cysteine 342.

Belongs to the arsA ATPase family. Homodimer.

The protein localises to the cytoplasm. Its subcellular location is the endoplasmic reticulum. ATPase required for the post-translational delivery of tail-anchored (TA) proteins to the endoplasmic reticulum. Recognizes and selectively binds the transmembrane domain of TA proteins in the cytosol. This complex then targets to the endoplasmic reticulum by membrane-bound receptors, where the tail-anchored protein is released for insertion. This process is regulated by ATP binding and hydrolysis. ATP binding drives the homodimer towards the closed dimer state, facilitating recognition of newly synthesized TA membrane proteins. ATP hydrolysis is required for insertion. Subsequently, the homodimer reverts towards the open dimer state, lowering its affinity for the membrane-bound receptor, and returning it to the cytosol to initiate a new round of targeting. In Leishmania braziliensis, this protein is ATPase ASNA1 homolog.